The sequence spans 130 residues: MLKTLPPTLREKKRYVALEIIFEEELFQKDVISIVRNALMNYSGVLGCSKANPWLIDYNHPYGILRISREEVDNLRSSLSLANEHRKKPINIHIIGISNSVKHIREKFLHVPHEPYYKVIQKLKKKGPKK.

This sequence belongs to the eukaryotic/archaeal RNase P protein component 2 family. Consists of a catalytic RNA component and at least 4-5 protein subunits.

It is found in the cytoplasm. The enzyme catalyses Endonucleolytic cleavage of RNA, removing 5'-extranucleotides from tRNA precursor.. Its function is as follows. Part of ribonuclease P, a protein complex that generates mature tRNA molecules by cleaving their 5'-ends. This chain is Ribonuclease P protein component 2, found in Methanococcus maripaludis (strain C6 / ATCC BAA-1332).